Here is a 267-residue protein sequence, read N- to C-terminus: Small ribosomal subunit protein uS2 (267 aa).

The tract at residues 225–267 (LREQELEGEEQEEAAPATEEEKKELIEEAVAEGEAEETEEEEK) is disordered. The span at 251–267 (EEAVAEGEAEETEEEEK) shows a compositional bias: acidic residues.

It belongs to the universal ribosomal protein uS2 family.

This Nitratiruptor sp. (strain SB155-2) protein is Small ribosomal subunit protein uS2.